The following is a 404-amino-acid chain: AT-hook motif nuclear-localized protein 3 (404 aa).

3 disordered regions span residues Met-1–Thr-51, Pro-70–Thr-100, and Ser-113–Asn-133. The span at Thr-7 to Leu-19 shows a compositional bias: polar residues. The segment covering Asp-35 to Thr-51 has biased composition (pro residues). Positions Phe-71–Glu-83 are enriched in polar residues. The Bipartite nuclear localization signal signature appears at Lys-86–Lys-94. Residues Lys-86–Asp-98 constitute a DNA-binding region (a.T hook). The span at Arg-123–Asn-133 shows a compositional bias: basic residues. A PPC domain is found at Gly-163 to Ser-308. A disordered region spans residues Pro-359–Ser-404. Acidic residues predominate over residues Val-373–Gly-393.

In terms of assembly, homodimer. Interacts with AHL4. As to expression, expressed in both procambium and xylem precursors of the root meristem. Also detected in the endodermis in the late elongation zone and onwards.

Its subcellular location is the nucleus. Transcription factor that specifically binds AT-rich DNA sequences related to the nuclear matrix attachment regions (MARs). Acts redundantly with AHL4 to regulate the formation of tissue boundary between the xylem and procambium in the root meristem. This Arabidopsis thaliana (Mouse-ear cress) protein is AT-hook motif nuclear-localized protein 3.